We begin with the raw amino-acid sequence, 457 residues long: ATP synthase subunit beta (457 aa).

ATP is bound at residue 147-154; sequence GGAGVGKT.

Belongs to the ATPase alpha/beta chains family. As to quaternary structure, F-type ATPases have 2 components, CF(1) - the catalytic core - and CF(0) - the membrane proton channel. CF(1) has five subunits: alpha(3), beta(3), gamma(1), delta(1), epsilon(1). CF(0) has three main subunits: a(1), b(2) and c(9-12). The alpha and beta chains form an alternating ring which encloses part of the gamma chain. CF(1) is attached to CF(0) by a central stalk formed by the gamma and epsilon chains, while a peripheral stalk is formed by the delta and b chains.

It localises to the cell inner membrane. It catalyses the reaction ATP + H2O + 4 H(+)(in) = ADP + phosphate + 5 H(+)(out). Its function is as follows. Produces ATP from ADP in the presence of a proton gradient across the membrane. The catalytic sites are hosted primarily by the beta subunits. The protein is ATP synthase subunit beta of Actinobacillus pleuropneumoniae serotype 5b (strain L20).